Here is a 133-residue protein sequence, read N- to C-terminus: Classical arabinogalactan protein 5 (133 aa).

A signal peptide spans 1-21; the sequence is MASKSVVVFLFLALVASSVVA. Glutamine 22 carries the post-translational modification Pyrrolidone carboxylic acid. The interval 23–110 is disordered; that stretch reads APGPAPTISP…QSPLSGSPNA (88 aa). The segment covering 25–37 has biased composition (pro residues); it reads GPAPTISPLPATP. Residues 38-48 show a composition bias toward low complexity; it reads TPSQSPRATAP. Over residues 49 to 81 the composition is skewed to pro residues; the sequence is APSPSANPPPSAPTTAPPVSQPPTESPPAPPTS. The GPI-anchor amidated asparagine moiety is linked to residue asparagine 109. The propeptide at 110 to 133 is removed in mature form; sequence AAAVSRVSLVGTFAGVAVIAALLL.

This sequence belongs to the classical AGP family. Post-translationally, O-glycosylated on the hydroxyproline residues. As to expression, expressed at a low level in flowers and siliques.

The protein resides in the cell membrane. In terms of biological role, proteoglycan that seems to be implicated in diverse developmental roles such as differentiation, cell-cell recognition, embryogenesis and programmed cell death. The sequence is that of Classical arabinogalactan protein 5 (AGP5) from Arabidopsis thaliana (Mouse-ear cress).